Consider the following 97-residue polypeptide: Cell division topological specificity factor (97 aa).

Belongs to the MinE family.

Functionally, prevents the cell division inhibition by proteins MinC and MinD at internal division sites while permitting inhibition at polar sites. This ensures cell division at the proper site by restricting the formation of a division septum at the midpoint of the long axis of the cell. This is Cell division topological specificity factor from Rhodospirillum centenum (strain ATCC 51521 / SW).